A 233-amino-acid polypeptide reads, in one-letter code: MNPDEDTEWNDILRSKGILPEKEPDVDDVLDDALVDAKQLAHENRLENKDLDELAELEDEEDDEFLQMYRNKRMQEWKDQMSKAKFGSVYPISKPEYTAEVTDASKEVFVVVHMFQDSLPACKLLAAILERLAPMYPQIKFVKIPGKQAVENYPEAMMPTLLIYGHGDLQQQILTLATLGGMNTSVVDVAEALVRAGALKDSDIAALKDPQNAEDELGKRDSSVNDDLDDDFD.

The Phosducin domain maps to 58–212; that stretch reads EDEEDDEFLQ…DIAALKDPQN (155 aa). The segment at 86-233 is thioredoxin fold; it reads FGSVYPISKP…VNDDLDDDFD (148 aa). Residues 207–233 form a disordered region; the sequence is LKDPQNAEDELGKRDSSVNDDLDDDFD. Residues serine 222 and serine 223 each carry the phosphoserine modification. Positions 224–233 are enriched in acidic residues; it reads VNDDLDDDFD.

This sequence belongs to the phosducin family.

This chain is Phosducin-like protein C2A9.09, found in Schizosaccharomyces pombe (strain 972 / ATCC 24843) (Fission yeast).